Here is a 490-residue protein sequence, read N- to C-terminus: MAFKDLRDFIALLEEKGQLKRISHPVDPYLEITEISDRTLRAGGPALLFENVVGHTTPVLANLFGTPDRVAMGMGQENVGALREVGELLAFLKEPEPPKGMKDAWEKLPIFKQVLNMAPKLIKNAPCQEFEVSGEDVDLTAIPIQTCWPGDAAPLVTWPLVVTKGPHKDRQNLGIYRMQLIGKNKLIMRWLSHRGGALDFREWQQQHPGENFPVSVALGADPATILGAVTPVPDTLSEYAFAGLLRGSKTEVTKSRGNDLQVPASAEYILEGHIAPGEMADEGPFGDHTGYYNEVDSFPVFTVERITHRKDPIYHSTYTGRPPDEPAVLGVALNEVFVPILKKQFPEIVDFYLPPEGCSYRMAVVTMKKQYPGHAKRVMLGVWSFLRQFMYTKFVIVTDDDVNARDWNDVIWALTTRVDPMRDTTMIDNTPIDYLDFASPVSGLGSKMGIDATNKWPGETNREWGTTIEMTAEVKNKVDAIWDKLGIDDK.

Residue asparagine 172 coordinates Mn(2+). Residues 175–177 (IYR), 189–191 (RWL), and 194–195 (RG) contribute to the prenylated FMN site. Glutamate 238 serves as a coordination point for Mn(2+). The active-site Proton donor is aspartate 287.

This sequence belongs to the UbiD family. As to quaternary structure, homohexamer. Prenylated FMN serves as cofactor. It depends on Mn(2+) as a cofactor.

The protein resides in the cell membrane. The enzyme catalyses a 4-hydroxy-3-(all-trans-polyprenyl)benzoate + H(+) = a 2-(all-trans-polyprenyl)phenol + CO2. Its pathway is cofactor biosynthesis; ubiquinone biosynthesis. Its function is as follows. Catalyzes the decarboxylation of 3-octaprenyl-4-hydroxy benzoate to 2-octaprenylphenol, an intermediate step in ubiquinone biosynthesis. In Saccharophagus degradans (strain 2-40 / ATCC 43961 / DSM 17024), this protein is 3-octaprenyl-4-hydroxybenzoate carboxy-lyase.